A 332-amino-acid polypeptide reads, in one-letter code: Sesquiterpene synthase MBR_10393 (332 aa).

2 residues coordinate Mg(2+): D91 and D96. A DDXXXD motif motif is present at residues 91-96; the sequence is DDLFVD. R184 provides a ligand contact to substrate. Residues N230, S234, and E238 each contribute to the Mg(2+) site.

The protein belongs to the terpene synthase family. It depends on Mg(2+) as a cofactor.

It catalyses the reaction (2E,6E)-farnesyl diphosphate + H2O = (+)-corvol ether B + diphosphate. The catalysed reaction is (2E,6E)-farnesyl diphosphate + H2O = (+)-corvol ether A + diphosphate. Its function is as follows. Terpene synthase that catalyzes the conversion of (2E,6E)-farnesyl diphosphate (FPP) into sesquiterpenes which are important for fungi-environment interactions. Produces a mixture consisting of 8 sesquiterpenes including corvol ethers A and B, as well as traces of epizonarene, gamma-cadinene, delta-cadinene, alpha-cadinene, alpha-cadinol, and an unidentified sesquiterpene. The major product is corvol ether B. The protein is Sesquiterpene synthase MBR_10393 of Metarhizium brunneum (strain ARSEF 3297).